Consider the following 647-residue polypeptide: Threonine--tRNA ligase (647 aa).

Residues 1–61 (MIKITFPDGA…EEDGSIEIVT (61 aa)) form the TGS domain. The catalytic stretch occupies residues 240–538 (DHRKLGKELD…LIETYKGAFP (299 aa)). Zn(2+) contacts are provided by C334, H385, and H515.

Belongs to the class-II aminoacyl-tRNA synthetase family. In terms of assembly, homodimer. Zn(2+) serves as cofactor.

It localises to the cytoplasm. The catalysed reaction is tRNA(Thr) + L-threonine + ATP = L-threonyl-tRNA(Thr) + AMP + diphosphate + H(+). Catalyzes the attachment of threonine to tRNA(Thr) in a two-step reaction: L-threonine is first activated by ATP to form Thr-AMP and then transferred to the acceptor end of tRNA(Thr). Also edits incorrectly charged L-seryl-tRNA(Thr). The polypeptide is Threonine--tRNA ligase (Streptococcus pyogenes serotype M28 (strain MGAS6180)).